The following is a 471-amino-acid chain: Glycosyl hydrolase family 109 protein 1 (471 aa).

The first 15 residues, 1–15 (MIKNLSTFFVGIALS), serve as a signal peptide directing secretion. The N-palmitoyl cysteine moiety is linked to residue Cys-16. A lipid anchor (S-diacylglycerol cysteine) is attached at Cys-16. Residues 70–71 (MR), Asp-92, 141–144 (WKHH), 161–162 (EV), and Asn-190 each bind NAD(+). Residues Tyr-219, Arg-235, 247 to 250 (YATH), and Tyr-325 each bind substrate. Tyr-247 provides a ligand contact to NAD(+).

The protein belongs to the Gfo/Idh/MocA family. Glycosyl hydrolase 109 subfamily. NAD(+) serves as cofactor.

The protein localises to the cell membrane. Glycosidase. This Phocaeicola vulgatus (strain ATCC 8482 / DSM 1447 / JCM 5826 / CCUG 4940 / NBRC 14291 / NCTC 11154) (Bacteroides vulgatus) protein is Glycosyl hydrolase family 109 protein 1.